We begin with the raw amino-acid sequence, 224 residues long: Phosphoribosylformylglycinamidine synthase subunit PurQ (224 aa).

Residues 2–224 (TVAVVRFGGS…DGQGILGAFA (223 aa)) form the Glutamine amidotransferase type-1 domain. The active-site Nucleophile is the Cys85. Catalysis depends on residues His202 and Glu204.

In terms of assembly, part of the FGAM synthase complex composed of 1 PurL, 1 PurQ and 2 PurS subunits.

It is found in the cytoplasm. The enzyme catalyses N(2)-formyl-N(1)-(5-phospho-beta-D-ribosyl)glycinamide + L-glutamine + ATP + H2O = 2-formamido-N(1)-(5-O-phospho-beta-D-ribosyl)acetamidine + L-glutamate + ADP + phosphate + H(+). It carries out the reaction L-glutamine + H2O = L-glutamate + NH4(+). The protein operates within purine metabolism; IMP biosynthesis via de novo pathway; 5-amino-1-(5-phospho-D-ribosyl)imidazole from N(2)-formyl-N(1)-(5-phospho-D-ribosyl)glycinamide: step 1/2. Its function is as follows. Part of the phosphoribosylformylglycinamidine synthase complex involved in the purines biosynthetic pathway. Catalyzes the ATP-dependent conversion of formylglycinamide ribonucleotide (FGAR) and glutamine to yield formylglycinamidine ribonucleotide (FGAM) and glutamate. The FGAM synthase complex is composed of three subunits. PurQ produces an ammonia molecule by converting glutamine to glutamate. PurL transfers the ammonia molecule to FGAR to form FGAM in an ATP-dependent manner. PurS interacts with PurQ and PurL and is thought to assist in the transfer of the ammonia molecule from PurQ to PurL. The sequence is that of Phosphoribosylformylglycinamidine synthase subunit PurQ from Halobacterium salinarum (strain ATCC 700922 / JCM 11081 / NRC-1) (Halobacterium halobium).